The primary structure comprises 766 residues: Ubiquitin carboxyl-terminal hydrolase creB (766 aa).

The tract at residues 1–32 (MGSFLKSFRKDVGSAAPSVGAPPAKKEPQPLP) is disordered. Low complexity predominate over residues 13–23 (GSAAPSVGAPP). The 412-residue stretch at 55–466 (YGMENFGNTC…CAYVLFYQET (412 aa)) folds into the USP domain. Cys64 functions as the Nucleophile in the catalytic mechanism. 2 disordered regions span residues 115–145 (EALA…KDSP) and 243–266 (ESPQ…SRTP). Residues 249-263 (SDVSDSVIPSSSSGS) show a composition bias toward low complexity. Catalysis depends on His417, which acts as the Proton acceptor. The interval 526–752 (APTAPQLSTH…HDRSSHGKWR (227 aa)) is disordered. Positions 548-572 (SPAPDPAPLTSLPPIPPIPETPPAP) are enriched in pro residues. Positions 573–620 (LTSRKSDLQSKKERVKEEKERKAAEKEKEKQRRKEIETRLKDRQRRED) form a coiled coil. 2 stretches are compositionally biased toward basic and acidic residues: residues 576–643 (RKSD…RNHA) and 734–747 (EQEH…DRSS).

This sequence belongs to the peptidase C19 family. In terms of assembly, interacts with creA, creC and qutD.

It catalyses the reaction Thiol-dependent hydrolysis of ester, thioester, amide, peptide and isopeptide bonds formed by the C-terminal Gly of ubiquitin (a 76-residue protein attached to proteins as an intracellular targeting signal).. Ubiquitin thioesterase component of the regulatory network controlling carbon source utilization through ubiquitination and deubiquitination involving creA, creB, creC, creD and acrB. Deubiquitinates the creA catabolic repressor and the quinate permease qutD. Also plays a role in response to carbon starvation and the control of extracellular proteases activity. This is Ubiquitin carboxyl-terminal hydrolase creB (creB) from Emericella nidulans (strain FGSC A4 / ATCC 38163 / CBS 112.46 / NRRL 194 / M139) (Aspergillus nidulans).